The chain runs to 159 residues: Stress-induced protein 1 (159 aa).

The sHSP domain maps to 33-141; sequence NNFNNIVPQQ…TVRALPIHTS (109 aa).

Belongs to the small heat shock protein (HSP20) family.

The chain is Stress-induced protein 1 from Caenorhabditis elegans.